Reading from the N-terminus, the 177-residue chain is MNDLFLFNNSFQDSFEINTDLFDTNIINLSIVLFVVIRFLGEALSDTLENRKQTIIDSLQNSNKKVYIVKNKLVEVKSKLELTQTEVENVYSSRFSYFKTRKQTLLEQVQSYLTQLQSLQKDSIEGQTKKVLSDVYDTTISKTFDTLYINLASAFKKSGNFSNKKKAITYSYLKRLN.

A helical transmembrane segment spans residues 26 to 44; the sequence is IINLSIVLFVVIRFLGEAL.

This sequence belongs to the ATPase B chain family. In terms of assembly, F-type ATPases have 2 components, F(1) - the catalytic core - and F(0) - the membrane proton channel. F(1) has five subunits: alpha(3), beta(3), gamma(1), delta(1), epsilon(1). F(0) has four main subunits: a(1), b(1), b'(1) and c(10-14). The alpha and beta chains form an alternating ring which encloses part of the gamma chain. F(1) is attached to F(0) by a central stalk formed by the gamma and epsilon chains, while a peripheral stalk is formed by the delta, b and b' chains.

It localises to the plastid. It is found in the chloroplast thylakoid membrane. Functionally, f(1)F(0) ATP synthase produces ATP from ADP in the presence of a proton or sodium gradient. F-type ATPases consist of two structural domains, F(1) containing the extramembraneous catalytic core and F(0) containing the membrane proton channel, linked together by a central stalk and a peripheral stalk. During catalysis, ATP synthesis in the catalytic domain of F(1) is coupled via a rotary mechanism of the central stalk subunits to proton translocation. In terms of biological role, component of the F(0) channel, it forms part of the peripheral stalk, linking F(1) to F(0). The chain is ATP synthase subunit b, chloroplastic from Bigelowiella natans (Pedinomonas minutissima).